The following is a 323-amino-acid chain: tRNA U34 carboxymethyltransferase (323 aa).

Residues lysine 91, tryptophan 105, lysine 110, glycine 130, 180 to 181, methionine 196, tyrosine 200, and arginine 315 contribute to the carboxy-S-adenosyl-L-methionine site; that span reads VE.

The protein belongs to the class I-like SAM-binding methyltransferase superfamily. CmoB family. As to quaternary structure, homotetramer.

The catalysed reaction is carboxy-S-adenosyl-L-methionine + 5-hydroxyuridine(34) in tRNA = 5-carboxymethoxyuridine(34) in tRNA + S-adenosyl-L-homocysteine + H(+). In terms of biological role, catalyzes carboxymethyl transfer from carboxy-S-adenosyl-L-methionine (Cx-SAM) to 5-hydroxyuridine (ho5U) to form 5-carboxymethoxyuridine (cmo5U) at position 34 in tRNAs. This Trichlorobacter lovleyi (strain ATCC BAA-1151 / DSM 17278 / SZ) (Geobacter lovleyi) protein is tRNA U34 carboxymethyltransferase.